The chain runs to 233 residues: Small ribosomal subunit protein uS2 (233 aa).

Belongs to the universal ribosomal protein uS2 family.

The protein is Small ribosomal subunit protein uS2 of Clostridium perfringens (strain ATCC 13124 / DSM 756 / JCM 1290 / NCIMB 6125 / NCTC 8237 / Type A).